Reading from the N-terminus, the 433-residue chain is Chitinase-like protein EN03 (433 aa).

A signal peptide spans 1–16; that stretch reads MKLFIALVGLLALAKA. Residues 23 to 433 form the GH18 domain; sequence SKVLCYYDSR…PILRAAKYRL (411 aa). The cysteines at positions 27 and 54 are disulfide-linked. Asn-220 carries an N-linked (GlcNAc...) asparagine glycan. Residues Cys-337 and Cys-418 are joined by a disulfide bond.

This sequence belongs to the glycosyl hydrolase 18 family. IDGF subfamily.

It localises to the secreted. This chain is Chitinase-like protein EN03, found in Bombyx mori (Silk moth).